A 241-amino-acid chain; its full sequence is Ribonuclease PH (241 aa).

Residues R86 and 124–126 each bind phosphate; that span reads GTR.

This sequence belongs to the RNase PH family. As to quaternary structure, homohexameric ring arranged as a trimer of dimers.

The catalysed reaction is tRNA(n+1) + phosphate = tRNA(n) + a ribonucleoside 5'-diphosphate. Functionally, phosphorolytic 3'-5' exoribonuclease that plays an important role in tRNA 3'-end maturation. Removes nucleotide residues following the 3'-CCA terminus of tRNAs; can also add nucleotides to the ends of RNA molecules by using nucleoside diphosphates as substrates, but this may not be physiologically important. Probably plays a role in initiation of 16S rRNA degradation (leading to ribosome degradation) during starvation. The chain is Ribonuclease PH from Hamiltonella defensa subsp. Acyrthosiphon pisum (strain 5AT).